We begin with the raw amino-acid sequence, 524 residues long: MFTARIARSMASESAPAASSVAPGSSGAPMADCVLEVRGVGKSFPGVVALDGVQFRVRRGTVHALMGENGAGKSTLMKIIAGVYTPDQGEILINGEPVVLNGPLDALDRGIAMIHQELNLMPYMTVAENIWIRREPKNRFGLIDHAELRRRTAALFERLSIDIDPETDVRTLTVASRQMVEIAKAVSFDSDVLIMDEPTSALTDKEVTHLFRIIRQLREQGKGIVYITHKMNELFEIADEFSVFRDGKYIGTHASSDVTRDDIIRMMVGREITQMFPKEEVPIGDVVLSVKDLCVDGVFRDVSFELRAGEILGVAGLVGSGRSNVAEALFGVVPATSGEIRIDGKPVRISTPAQAMKHGMAFLTEDRKDSGCFLNLDLLANMEAAVLSRRYVKFNFVQQAQLKRDCEEMSRMLRVKSPGLHEEIQNLSGGNQQKVLIGRWLLTQPRILILDEPTRGIDVGAKAEIHRLVSALAGKGVAVLMISSEMPEVLGMSDRVMVMHEGRMTGIVDRKDADQVRIMDLASR.

ABC transporter domains are found at residues 35-271 (LEVR…VGRE) and 281-520 (VPIG…RIMD). 67–74 (GENGAGKS) is a binding site for ATP.

Belongs to the ABC transporter superfamily. Carbohydrate importer 2 (CUT2) (TC 3.A.1.2) family.

It localises to the cell inner membrane. The enzyme catalyses D-ribose(out) + ATP + H2O = D-ribose(in) + ADP + phosphate + H(+). The catalysed reaction is D-galactose(out) + ATP + H2O = D-galactose(in) + ADP + phosphate + H(+). Its function is as follows. Part of an ABC transporter complex involved in carbohydrate import. Could be involved in ribose, galactose and/or methyl galactoside import. Responsible for energy coupling to the transport system. This chain is Putative ribose/galactose/methyl galactoside import ATP-binding protein 1, found in Burkholderia cenocepacia (strain HI2424).